A 434-amino-acid polypeptide reads, in one-letter code: D-amino acid dehydrogenase (434 aa).

3-17 is a binding site for FAD; the sequence is VIVLGSGVIGTTTAY.

The protein belongs to the DadA oxidoreductase family. Requires FAD as cofactor.

The enzyme catalyses a D-alpha-amino acid + A + H2O = a 2-oxocarboxylate + AH2 + NH4(+). In terms of biological role, oxidative deamination of D-amino acids. The protein is D-amino acid dehydrogenase of Bordetella bronchiseptica (strain ATCC BAA-588 / NCTC 13252 / RB50) (Alcaligenes bronchisepticus).